Reading from the N-terminus, the 211-residue chain is Probable GTP-binding protein EngB (211 aa).

One can recognise an EngB-type G domain in the interval 21 to 205 (LMATIVFVGR…KNRIYEIIRE (185 aa)). GTP contacts are provided by residues 29-36 (GRSNVGKS), 54-58 (GVTRK), 71-74 (DMPG), 151-154 (NKLD), and 184-186 (ISA). Mg(2+)-binding residues include S36 and T56.

It belongs to the TRAFAC class TrmE-Era-EngA-EngB-Septin-like GTPase superfamily. EngB GTPase family. Mg(2+) serves as cofactor.

Necessary for normal cell division and for the maintenance of normal septation. The protein is Probable GTP-binding protein EngB of Pyrococcus abyssi (strain GE5 / Orsay).